A 150-amino-acid polypeptide reads, in one-letter code: Lipoprotein signal peptidase (150 aa).

Helical transmembrane passes span 5–25 (LSLVIIVVGIIADQVFKNWVV), 59–79 (QQWFFLVLTPIVLIVALWFLW), and 83–103 (GQNWYFAGLTLIIAGALGNFI). Catalysis depends on residues Asp-113 and Asp-129. Residues 124-144 (IFNIADILLSVGFVVLFIAIL) form a helical membrane-spanning segment.

This sequence belongs to the peptidase A8 family.

The protein localises to the cell membrane. It carries out the reaction Release of signal peptides from bacterial membrane prolipoproteins. Hydrolyzes -Xaa-Yaa-Zaa-|-(S,diacylglyceryl)Cys-, in which Xaa is hydrophobic (preferably Leu), and Yaa (Ala or Ser) and Zaa (Gly or Ala) have small, neutral side chains.. It functions in the pathway protein modification; lipoprotein biosynthesis (signal peptide cleavage). Its function is as follows. This protein specifically catalyzes the removal of signal peptides from prolipoproteins. The sequence is that of Lipoprotein signal peptidase from Lactococcus lactis subsp. cremoris (strain MG1363).